A 396-amino-acid polypeptide reads, in one-letter code: S-adenosylmethionine synthase 3 (396 aa).

E12 is a binding site for Mg(2+). Residue H18 participates in ATP binding. A K(+)-binding site is contributed by E46. E59 and Q102 together coordinate L-methionine. ATP is bound by residues D170–K172, S238–F241, D249, R255–K256, A272, K276, and K280. D249 contacts L-methionine. Residue K280 coordinates L-methionine.

Belongs to the AdoMet synthase family. Homotetramer. The cofactor is Mn(2+). Requires Mg(2+) as cofactor. It depends on Co(2+) as a cofactor. K(+) is required as a cofactor.

It is found in the cytoplasm. The catalysed reaction is L-methionine + ATP + H2O = S-adenosyl-L-methionine + phosphate + diphosphate. It functions in the pathway amino-acid biosynthesis; S-adenosyl-L-methionine biosynthesis; S-adenosyl-L-methionine from L-methionine: step 1/1. Its function is as follows. Catalyzes the formation of S-adenosylmethionine from methionine and ATP. The reaction comprises two steps that are both catalyzed by the same enzyme: formation of S-adenosylmethionine (AdoMet) and triphosphate, and subsequent hydrolysis of the triphosphate. The sequence is that of S-adenosylmethionine synthase 3 (METK3) from Oryza sativa subsp. japonica (Rice).